The following is a 152-amino-acid chain: ESAT-6 secretion machinery protein EssA (152 aa).

At 1–114 (MLMNSVIALT…PYIQNKQEKK (114 aa)) the chain is on the cytoplasmic side. The chain crosses the membrane as a helical span at residues 115–135 (IFPYILMSVGAFLTLGFVIFS). The Extracellular portion of the chain corresponds to 136–152 (IHKGRRTKNESARKSNI).

It belongs to the EssA family.

The protein resides in the cell membrane. Its function is as follows. Component of the ESAT-6 secretion system (Ess). Required for the secretion of EsxA. This chain is ESAT-6 secretion machinery protein EssA, found in Staphylococcus aureus (strain MRSA252).